The following is a 151-amino-acid chain: Transcriptional repressor NrdR (151 aa).

Residues 3–34 fold into a zinc finger; the sequence is CPYCAYGESKVVDSRSTEDGSSIRRRRECLKC. The ATP-cone domain maps to 49–139; it reads ILVIKKNMSR…VYRQFKDINT (91 aa).

Belongs to the NrdR family. Requires Zn(2+) as cofactor.

Its function is as follows. Negatively regulates transcription of bacterial ribonucleotide reductase nrd genes and operons by binding to NrdR-boxes. This chain is Transcriptional repressor NrdR, found in Clostridium botulinum (strain 657 / Type Ba4).